Here is a 454-residue protein sequence, read N- to C-terminus: Arginine biosynthesis bifunctional protein ArgJ, mitochondrial (454 aa).

Residues Thr184, Lys213, Thr224, Glu311, Asn449, and Thr454 each contribute to the substrate site. Catalysis depends on Thr224, which acts as the Nucleophile.

This sequence belongs to the ArgJ family. Heterodimer of an alpha and a beta chain. The alpha and beta chains are autoproteolytically processed from a single precursor protein within the mitochondrion.

It localises to the mitochondrion matrix. It catalyses the reaction N(2)-acetyl-L-ornithine + L-glutamate = N-acetyl-L-glutamate + L-ornithine. The catalysed reaction is L-glutamate + acetyl-CoA = N-acetyl-L-glutamate + CoA + H(+). It participates in amino-acid biosynthesis; L-arginine biosynthesis; L-ornithine and N-acetyl-L-glutamate from L-glutamate and N(2)-acetyl-L-ornithine (cyclic): step 1/1. It functions in the pathway amino-acid biosynthesis; L-arginine biosynthesis; N(2)-acetyl-L-ornithine from L-glutamate: step 1/4. Functionally, catalyzes two activities which are involved in the cyclic version of arginine biosynthesis: the synthesis of acetylglutamate from glutamate and acetyl-CoA, and of ornithine by transacetylation between acetylornithine and glutamate. The polypeptide is Arginine biosynthesis bifunctional protein ArgJ, mitochondrial (Aspergillus clavatus (strain ATCC 1007 / CBS 513.65 / DSM 816 / NCTC 3887 / NRRL 1 / QM 1276 / 107)).